Consider the following 139-residue polypeptide: Ribosome maturation factor RimP (139 aa).

This sequence belongs to the RimP family.

The protein resides in the cytoplasm. Its function is as follows. Required for maturation of 30S ribosomal subunits. In Syntrophomonas wolfei subsp. wolfei (strain DSM 2245B / Goettingen), this protein is Ribosome maturation factor RimP.